Reading from the N-terminus, the 253-residue chain is 3-dehydroquinate dehydratase (253 aa).

3-dehydroquinate is bound by residues 46–48 (EFR) and R82. The Proton donor/acceptor role is filled by H143. Catalysis depends on K170, which acts as the Schiff-base intermediate with substrate. 3 residues coordinate 3-dehydroquinate: R213, S232, and Q236.

It belongs to the type-I 3-dehydroquinase family. Homodimer.

It catalyses the reaction 3-dehydroquinate = 3-dehydroshikimate + H2O. It participates in metabolic intermediate biosynthesis; chorismate biosynthesis; chorismate from D-erythrose 4-phosphate and phosphoenolpyruvate: step 3/7. Functionally, involved in the third step of the chorismate pathway, which leads to the biosynthesis of aromatic amino acids. Catalyzes the cis-dehydration of 3-dehydroquinate (DHQ) and introduces the first double bond of the aromatic ring to yield 3-dehydroshikimate. This chain is 3-dehydroquinate dehydratase, found in Clostridium novyi (strain NT).